The sequence spans 375 residues: Succinyl-diaminopimelate desuccinylase (375 aa).

A Zn(2+)-binding site is contributed by histidine 66. Aspartate 68 is an active-site residue. Residue aspartate 99 coordinates Zn(2+). The active-site Proton acceptor is the glutamate 133. Glutamate 134, glutamate 162, and histidine 348 together coordinate Zn(2+).

The protein belongs to the peptidase M20A family. DapE subfamily. In terms of assembly, homodimer. Zn(2+) is required as a cofactor. Requires Co(2+) as cofactor.

The enzyme catalyses N-succinyl-(2S,6S)-2,6-diaminopimelate + H2O = (2S,6S)-2,6-diaminopimelate + succinate. It participates in amino-acid biosynthesis; L-lysine biosynthesis via DAP pathway; LL-2,6-diaminopimelate from (S)-tetrahydrodipicolinate (succinylase route): step 3/3. In terms of biological role, catalyzes the hydrolysis of N-succinyl-L,L-diaminopimelic acid (SDAP), forming succinate and LL-2,6-diaminopimelate (DAP), an intermediate involved in the bacterial biosynthesis of lysine and meso-diaminopimelic acid, an essential component of bacterial cell walls. This Janthinobacterium sp. (strain Marseille) (Minibacterium massiliensis) protein is Succinyl-diaminopimelate desuccinylase.